The primary structure comprises 351 residues: MPTKIAVLGAGSWGTVLANLLTENGHEVDLWSHNPDQVALMKRTHQNEHYLGAEFTLQPALHVTADLGQALDQAAVILFVVPTNAIRSVAEQVKPILQAHKGRGEQPIIVHAAKGLERGSELRISQVLAEVLPKELIQGIVVISGPSHAEDVATHDITTLTAASDDLKLAEKVQKLFMNDYFRLYTNTDVIGVEIGAALKNVIAIGAGALHGLGYGDNTKAALMTRGLAEISRVGVKLGAEPLTFIGLSGVGDLIVTCTSVHSRNWRAGNALGQGEKLPDVLKNMGMVVEGVSTTKVAHQMARELDVDMPITDAIYQVLYENAPIRTVITDLMKRSGKPEFDFDNASLQKP.

NADPH contacts are provided by Ser12, Trp13, His33, and Lys114. Sn-glycerol 3-phosphate is bound by residues Lys114, Gly145, and Ser147. Ala149 serves as a coordination point for NADPH. Sn-glycerol 3-phosphate is bound by residues Lys200, Asp253, Ser263, Arg264, and Asn265. Lys200 acts as the Proton acceptor in catalysis. Arg264 provides a ligand contact to NADPH. NADPH contacts are provided by Val288 and Glu290.

The protein belongs to the NAD-dependent glycerol-3-phosphate dehydrogenase family.

Its subcellular location is the cytoplasm. It carries out the reaction sn-glycerol 3-phosphate + NAD(+) = dihydroxyacetone phosphate + NADH + H(+). It catalyses the reaction sn-glycerol 3-phosphate + NADP(+) = dihydroxyacetone phosphate + NADPH + H(+). The protein operates within membrane lipid metabolism; glycerophospholipid metabolism. Functionally, catalyzes the reduction of the glycolytic intermediate dihydroxyacetone phosphate (DHAP) to sn-glycerol 3-phosphate (G3P), the key precursor for phospholipid synthesis. This is Glycerol-3-phosphate dehydrogenase [NAD(P)+] from Lacticaseibacillus casei (strain BL23) (Lactobacillus casei).